The chain runs to 86 residues: MANIKSAKKRAITSEKNRQHNASRRSMMRTYFKKVIVAIEAGDKEAAQQAFSVATPILDRYATKGLIHKNKAARHKSRIAAKIKAL.

A compositionally biased stretch (basic residues) spans 1–11 (MANIKSAKKRA). Residues 1–26 (MANIKSAKKRAITSEKNRQHNASRRS) form a disordered region.

Belongs to the bacterial ribosomal protein bS20 family.

Binds directly to 16S ribosomal RNA. This Pseudoalteromonas translucida (strain TAC 125) protein is Small ribosomal subunit protein bS20.